Reading from the N-terminus, the 569-residue chain is MSEASGNLNSLRMANVALREELNALRGENANLGLQLGRALAEVNSLRGNVSSYIRWPVPIVPVLAEENLEFALSEIEVIPGGELPFLCRPPPRAEPDCISDDLLINVIQDRSTPDGPADPPLLPIPPPPALPPPASKEPPPQPPLAPLERPEIEPFSGDPVYLAEFLMQLETFIADHEVHFPGGAERVAFLISFFTGEAKDWAISVTQEGSPLHANFPRFLDEIRKEFCGPIPPRVAKKAIRKLKQGHCTLGSYADAFQFLAQFLSWDDCRLQNQFLKGLSEFFRKELLWSTEMADLDELILECVEIERKVRVPKPIPLPGVRNIIFPFAPSPNEEESEDEEYYSEDEDQEARRHRLHSKDQRKRMRAFQQEMKEKEEEEMKKEEEMKKKEEKEEEEEEEMKQKEEEEEIRNKNEEEGESKDEEDEDEDGGQKPEGEPQQDPGTEETYGEVEEEPLDEAQDDDLDELMEMEPTFVHASSQTSGPTSGYHAENFLGASPPIIQPSRRRNQNRVPLLEGLPGTNSPFYSSPQLIRRTGRLGQRQVRRRPPVLFRLTPRQGGHRAARGRIRV.

Disordered stretches follow at residues 115–151 and 323–506; these read DGPADPPLLPIPPPPALPPPASKEPPPQPPLAPLERP and RNII…PSRR. Residues 117 to 146 are compositionally biased toward pro residues; the sequence is PADPPLLPIPPPPALPPPASKEPPPQPPLA. Residues 334–350 are compositionally biased toward acidic residues; that stretch reads NEEESEDEEYYSEDEDQ. Basic residues predominate over residues 353–367; sequence RRHRLHSKDQRKRMR. Composition is skewed to basic and acidic residues over residues 372-392 and 401-415; these read EMKEKEEEEMKKEEEMKKKEE and MKQKEEEEEIRNKNE. Composition is skewed to acidic residues over residues 416–429 and 443–469; these read EEGESKDEEDEDED and GTEETYGEVEEEPLDEAQDDDLDELME. The span at 476–485 shows a compositional bias: polar residues; sequence HASSQTSGPT.

This chain is Retrotransposon Gag-like protein 5, found in Homo sapiens (Human).